The sequence spans 41 residues: Photosystem II reaction center protein L (41 aa).

Residues 20–40 (LFLGLLLVFVLGILSPATSLT) traverse the membrane as a helical segment.

It belongs to the PsbL family. PSII is composed of 1 copy each of membrane proteins PsbA, PsbB, PsbC, PsbD, PsbE, PsbF, PsbH, PsbI, PsbJ, PsbK, PsbL, PsbM, PsbT, PsbX, PsbY, PsbZ, Psb30/Ycf12, peripheral proteins PsbO, CyanoQ (PsbQ), PsbU, PsbV and a large number of cofactors. It forms dimeric complexes.

Its subcellular location is the cellular thylakoid membrane. In terms of biological role, one of the components of the core complex of photosystem II (PSII). PSII is a light-driven water:plastoquinone oxidoreductase that uses light energy to abstract electrons from H(2)O, generating O(2) and a proton gradient subsequently used for ATP formation. It consists of a core antenna complex that captures photons, and an electron transfer chain that converts photonic excitation into a charge separation. This subunit is found at the monomer-monomer interface and is required for correct PSII assembly and/or dimerization. This is Photosystem II reaction center protein L from Synechococcus sp. (strain ATCC 27144 / PCC 6301 / SAUG 1402/1) (Anacystis nidulans).